A 236-amino-acid polypeptide reads, in one-letter code: 2,3,4,5-tetrahydropyridine-2,6-dicarboxylate N-acetyltransferase (236 aa).

This sequence belongs to the transferase hexapeptide repeat family. DapH subfamily.

The catalysed reaction is (S)-2,3,4,5-tetrahydrodipicolinate + acetyl-CoA + H2O = L-2-acetamido-6-oxoheptanedioate + CoA. Its pathway is amino-acid biosynthesis; L-lysine biosynthesis via DAP pathway; LL-2,6-diaminopimelate from (S)-tetrahydrodipicolinate (acetylase route): step 1/3. Catalyzes the transfer of an acetyl group from acetyl-CoA to tetrahydrodipicolinate. The sequence is that of 2,3,4,5-tetrahydropyridine-2,6-dicarboxylate N-acetyltransferase from Oceanobacillus iheyensis (strain DSM 14371 / CIP 107618 / JCM 11309 / KCTC 3954 / HTE831).